The sequence spans 158 residues: Succinate dehydrogenase assembly factor 2, mitochondrial (158 aa).

The N-terminal 23 residues, 1 to 23 (MLRQLLATARRLLLPLATPKRCL), are a transit peptide targeting the mitochondrion.

This sequence belongs to the SDHAF2 family. In terms of assembly, interacts with the flavoprotein subunit within the SDH catalytic dimer.

The protein resides in the mitochondrion matrix. Plays an essential role in the assembly of succinate dehydrogenase (SDH), an enzyme complex (also referred to as respiratory complex II) that is a component of both the tricarboxylic acid (TCA) cycle and the mitochondrial electron transport chain, and which couples the oxidation of succinate to fumarate with the reduction of ubiquinone (coenzyme Q) to ubiquinol. Required for flavinylation (covalent attachment of FAD) of the flavoprotein subunit of the SDH catalytic dimer. The polypeptide is Succinate dehydrogenase assembly factor 2, mitochondrial (Drosophila virilis (Fruit fly)).